A 605-amino-acid chain; its full sequence is Arginyl-tRNA--protein transferase 2 (605 aa).

Over residues 496-513 (KVSSSSSSPQASETLLES) the composition is skewed to low complexity. The segment at 496-549 (KVSSSSSSPQASETLLESTSEHEDMEQGDTNDDDDEMYNSDEDSDSDSSSSRNR) is disordered. Positions 518–541 (EDMEQGDTNDDDDEMYNSDEDSDS) are enriched in acidic residues.

The protein belongs to the R-transferase family.

The catalysed reaction is an N-terminal L-alpha-aminoacyl-[protein] + L-arginyl-tRNA(Arg) = an N-terminal L-arginyl-L-aminoacyl-[protein] + tRNA(Arg) + H(+). Involved in the post-translational conjugation of arginine to the N-terminal aspartate or glutamate of a protein. This arginylation is required for degradation of the protein via the ubiquitin pathway. Component of the N-end rule pathway with ATE1 and PRT6. The N-end rule pathway regulates seed after-ripening, seedling sugar sensitivity, seedling lipid breakdown, and abscisic acid (ABA) sensitivity of germination. The end-rule pathway regulates various aspects of leaf and shoot development. Involved in the oxygen-dependent N-arginylation of RAP2-12, an activator of hypoxic gene expression. This N-terminal modification leads to ubiquitination by PRT6 and subsequent degradation of RAP2-12 under aerobic conditions. Involved in disease resistance. The end-rule pathway plays a role in regulating the timing and amplitude of the immune response following infection with the bacterial pathogen Pseudomonas syringae pv tomato. Regulates the biosynthesis of plant-defense metabolites such as glucosinolates, and the biosynthesis and response to the phytohormone jasmonate (JA), which plays a key role in plant immunity. The polypeptide is Arginyl-tRNA--protein transferase 2 (Arabidopsis thaliana (Mouse-ear cress)).